The primary structure comprises 213 residues: Orotate phosphoribosyltransferase (213 aa).

Residue Lys-26 coordinates 5-phospho-alpha-D-ribose 1-diphosphate. Orotate is bound at residue 34–35 (FF). 5-phospho-alpha-D-ribose 1-diphosphate-binding positions include 72–73 (YK), Arg-99, Lys-100, Lys-103, His-105, and 124–132 (DDVITAGTA). Thr-128 and Arg-156 together coordinate orotate.

It belongs to the purine/pyrimidine phosphoribosyltransferase family. PyrE subfamily. In terms of assembly, homodimer. It depends on Mg(2+) as a cofactor.

It catalyses the reaction orotidine 5'-phosphate + diphosphate = orotate + 5-phospho-alpha-D-ribose 1-diphosphate. The protein operates within pyrimidine metabolism; UMP biosynthesis via de novo pathway; UMP from orotate: step 1/2. In terms of biological role, catalyzes the transfer of a ribosyl phosphate group from 5-phosphoribose 1-diphosphate to orotate, leading to the formation of orotidine monophosphate (OMP). The chain is Orotate phosphoribosyltransferase from Escherichia coli O127:H6 (strain E2348/69 / EPEC).